Consider the following 457-residue polypeptide: MKQERSSGGYSGIPPTSKCLVCEHPDGGSAHFGSTSCLACAAFFRRTVSLNIQFQCKKDKNCVIFHELRMICRACRFDKCVKAGMRRECVQKRRSNKKIPKKHMNMLREDQIKMEYDECKFECSGDQTDDNSPLSIEKKSPPGLLPNDSPMMADFKFDPSDIPSTSGGSTQRLERSPSPKLAESKILSMNGEELLRFYVDQLKNSMDRRRMIFTDTALLAVIDDRGDVPFDATEPPPHSLKRQYESQRFDNLLAFDFCKCCPGFDFLSRVEKAIFFRSCSLAYCLLDIAWITVQAYPEEAAEPVLMYTDGSVCTVNNLSYGWDDEEDICAHDKKKLFLGFLGRFNDAICRPIRNLKMTHVEFAALKALCIWKLGYCEFTPSMKVIGKEHEEALLNGLHNYYDDLYGNPDETGMRIGNLILLMGTVFEMNQLIMETYKSAELFELFKLDALSKSLLTL.

Positions 16-92 form a DNA-binding region, nuclear receptor; the sequence is TSKCLVCEHP…AGMRRECVQK (77 aa). 2 NR C4-type zinc fingers span residues 19–40 and 56–80; these read CLVC…CLAC and CKKD…FDKC. Residues 125–182 form a disordered region; sequence GDQTDDNSPLSIEKKSPPGLLPNDSPMMADFKFDPSDIPSTSGGSTQRLERSPSPKLA. Over residues 162–171 the composition is skewed to polar residues; the sequence is IPSTSGGSTQ. Positions 201-457 constitute an NR LBD domain; that stretch reads QLKNSMDRRR…DALSKSLLTL (257 aa).

It belongs to the nuclear hormone receptor family.

Its subcellular location is the nucleus. Its function is as follows. Orphan nuclear receptor. The protein is Nuclear hormone receptor family member nhr-20 (nhr-20) of Caenorhabditis elegans.